The following is a 194-amino-acid chain: UPF0232 protein MSMEG_0004/MSMEI_0006 (194 aa).

Acidic residues predominate over residues 1-14 (MTGPFDDDGPEEDA). A disordered region spans residues 1–81 (MTGPFDDDGP…GPGPDARDPQ (81 aa)). Positions 30 to 52 (DLVRRTLEEARGAARSQGKDVGR) are enriched in basic and acidic residues.

The protein belongs to the UPF0232 family.

In Mycolicibacterium smegmatis (strain ATCC 700084 / mc(2)155) (Mycobacterium smegmatis), this protein is UPF0232 protein MSMEG_0004/MSMEI_0006.